The sequence spans 664 residues: UV-stimulated scaffold protein A homolog (664 aa).

The interval 10–153 is VHS-like; that stretch reads KVIGLIEKAT…LKNTLKLKFP (144 aa). Positions 148–180 form a coiled coil; that stretch reads LKLKFPDLQANAARIQRERQEREMKTKEILRNK. 2 disordered regions span residues 330–350 and 362–403; these read HGNEETNEEEEDIWEEDDGKV and MRTQ…GNSL. A compositionally biased stretch (acidic residues) spans 334 to 347; that stretch reads ETNEEEEDIWEEDD. Polar residues predominate over residues 363 to 374; sequence RTQQSENSSLPS. A compositionally biased stretch (basic and acidic residues) spans 377-387; it reads EAKKSTSEARS. The segment covering 388–402 has biased composition (polar residues); it reads NKVSNTKKVGSSGNS. Residues 473–500 form a UVSSA-type zinc finger; that stretch reads TPPCRASLKKGGLCQRRDLRVCPFHGPI. Zn(2+) contacts are provided by cysteine 476, cysteine 486, cysteine 494, and histidine 497. Disordered stretches follow at residues 514–546 and 640–664; these read SPLDESENQTSSTSGTNQDVSMDETTSDSDPNQ and VKGTNPQQLAQGNDEKCRDTSANQW. 2 stretches are compositionally biased toward polar residues: residues 521-533 and 640-650; these read NQTSSTSGTNQDV and VKGTNPQQLAQ.

This sequence belongs to the UVSSA family.

The protein localises to the chromosome. This is UV-stimulated scaffold protein A homolog from Arabidopsis thaliana (Mouse-ear cress).